The sequence spans 486 residues: MLPMAILPNGDRWCHGCRQRYLRSRFPIFSVDGSRTLPTCPYKWPNGQGDVAKFLQGIENRDLWEKEHGQIYRIWSGMKSEVVLTQPSHLQAVFRDSNKHSKAENNNSGYLMSELLGQCVGLVSRERWRTLRAVTEIPFQHDKMPSYLELIQRHTRHHFDRLLASGDLRQERIHPAQDLKMLPFWVVAEIFYGECDAEMKTELQQLCVLREDLFKRMIQGGIVRWQWSKYLPTATNRALAEFQRRWRAFNQRAYDRACQQQRILPIVLMIEAAREGSTSVEQIYQTIDEALFANLDVTTGGISWNLVFFAAHSDIQERVRQEVLSATDHDAYLLSSSTLLAACISESARLKPLAAFTVPQSAPTDRIIGGYNIPAGTNLVVDTYALNIRNGFWGADSQCYRPDRFLEHRATELRYQYWRFGFGPRQCMGRYVADLVIRTLLAHLVAHYELGWVEPDPGKNSTWQRDLESWITIPDLQLRCVQRRND.

A heme-binding site is contributed by Cys427.

The protein belongs to the cytochrome P450 family. Requires heme as cofactor.

The protein operates within mycotoxin biosynthesis. Functionally, cytochrome P450 monooxygenase; part of the gene cluster that mediates the biosynthesis of aspirochlorine (or antibiotic A30641), an unusual halogenated spiro compound with distinctive antifungal properties due to selective inhibition of protein biosynthesis, and which is also active against bacteria, viruses, and murine tumor cells. The non-ribosomal peptide synthetase (NRPS) aclP is responsible the formation of the diketopiperazine (DKP) core from the condensation of 2 phenylalanine residues. One Phe residue is tailored into chlorotyrosine by hydroxylation and chlorination, whereas the second Phe undergoes an unprecedented C-C bond cleavage to be converted into glycine. After formation of the DKP, sulfur is incorporated into the DKP by conjugation with glutathione by aclG, followed by its stepwise degradation to the thiol by aclI, aclJ and aclK, and the dithiol oxidation by aclT. In addition, oxygenases (aclB, aclC, aclL and aclO) and O-methyltransferases (aclM and aclU) act as tailoring enzymes to produce the intermediate dechloroaspirochlorine. Ultimately, chlorination of dechloroaspirochlorine by the halogenase aclH is the last step in the aspirochlorine pathway. The sequence is that of Cytochrome P450 monooxygenase aclC from Aspergillus oryzae (strain ATCC 42149 / RIB 40) (Yellow koji mold).